The chain runs to 249 residues: Cell surface glycoprotein CD200 receptor 2 (249 aa).

The N-terminal stretch at methionine 1 to threonine 24 is a signal peptide. One can recognise an Ig-like V-type domain in the interval isoleucine 25–glutamine 124. At isoleucine 25 to threonine 220 the chain is on the extracellular side. Cysteine 38 and cysteine 108 are joined by a disulfide. N-linked (GlcNAc...) asparagine glycans are attached at residues asparagine 73, asparagine 138, and asparagine 171. One can recognise an Ig-like C2-type domain in the interval proline 113–serine 208. Cysteine 143 and cysteine 192 form a disulfide bridge. Residues isoleucine 221 to phenylalanine 241 form a helical membrane-spanning segment. Over glutamine 242 to threonine 249 the chain is Cytoplasmic.

This sequence belongs to the CD200R family. As to expression, expressed in bone marrow, spleen, brain, lung, testis and thymus.

It localises to the membrane. In terms of biological role, according to PubMed:15187158 it is a receptor for the CD200 cell surface glycoprotein. According to PubMed:16081818 it is not a receptor for the CD200/OX2 cell surface glycoprotein. Involved in the recruitment or surface expression of the TYROBP receptor. In Mus musculus (Mouse), this protein is Cell surface glycoprotein CD200 receptor 2 (Cd200r1l).